A 372-amino-acid chain; its full sequence is Putative glutamate--cysteine ligase 2 (372 aa).

It belongs to the glutamate--cysteine ligase type 2 family. YbdK subfamily. As to quaternary structure, homodimer.

The enzyme catalyses L-cysteine + L-glutamate + ATP = gamma-L-glutamyl-L-cysteine + ADP + phosphate + H(+). ATP-dependent carboxylate-amine ligase which exhibits weak glutamate--cysteine ligase activity. This chain is Putative glutamate--cysteine ligase 2 (ybdK), found in Escherichia coli O17:K52:H18 (strain UMN026 / ExPEC).